The following is a 182-amino-acid chain: Mu-like prophage FluMu protein gp45 (182 aa).

Residues 159–182 are disordered; sequence TDHQSSGISGKNHDHEERVGKPVP. Positions 169-182 are enriched in basic and acidic residues; it reads KNHDHEERVGKPVP.

This sequence to phage Mu protein gp45.

The sequence is that of Mu-like prophage FluMu protein gp45 from Haemophilus influenzae (strain ATCC 51907 / DSM 11121 / KW20 / Rd).